A 340-amino-acid chain; its full sequence is Uroporphyrinogen decarboxylase (340 aa).

Substrate-binding positions include 21–25 (RQAGR), D71, Y148, S203, and H316.

Belongs to the uroporphyrinogen decarboxylase family. Homodimer.

It is found in the cytoplasm. It catalyses the reaction uroporphyrinogen III + 4 H(+) = coproporphyrinogen III + 4 CO2. It functions in the pathway porphyrin-containing compound metabolism; protoporphyrin-IX biosynthesis; coproporphyrinogen-III from 5-aminolevulinate: step 4/4. Functionally, catalyzes the decarboxylation of four acetate groups of uroporphyrinogen-III to yield coproporphyrinogen-III. This Campylobacter jejuni (strain RM1221) protein is Uroporphyrinogen decarboxylase.